We begin with the raw amino-acid sequence, 189 residues long: Probable DNA-directed RNA polymerase subunit delta (189 aa).

Residues 14–81 (LSMIEVAHAI…GENVWALRTW (68 aa)) enclose the HTH HARE-type domain. Composition is skewed to acidic residues over residues 90–100 (EVDHPEDDGDE) and 118–189 (EGDD…EDEE). The segment at 90 to 189 (EVDHPEDDGD…DDLDDDEDEE (100 aa)) is disordered.

It belongs to the RpoE family. In terms of assembly, RNAP is composed of a core of 2 alpha, a beta and a beta' subunits. The core is associated with a delta subunit and one of several sigma factors.

Participates in both the initiation and recycling phases of transcription. In the presence of the delta subunit, RNAP displays an increased specificity of transcription, a decreased affinity for nucleic acids, and an increased efficiency of RNA synthesis because of enhanced recycling. This is Probable DNA-directed RNA polymerase subunit delta from Lactobacillus delbrueckii subsp. bulgaricus (strain ATCC BAA-365 / Lb-18).